A 386-amino-acid polypeptide reads, in one-letter code: Patatin-17 (386 aa).

An N-terminal signal peptide occupies residues methionine 1–alanine 23. A PNPLA domain is found at leucine 32 to isoleucine 229. The GXGXXG signature appears at glycine 36–glycine 41. A GXSXG motif is present at residues glycine 75–glycine 79. The active-site Nucleophile is serine 77. N-linked (GlcNAc...) asparagine glycosylation is present at asparagine 202. The active-site Proton acceptor is the aspartate 215. Residues aspartate 215 to alanine 217 carry the DGA/G motif. A coiled-coil region spans residues glutamate 321 to alanine 384.

It belongs to the patatin family.

It is found in the vacuole. Its function is as follows. Non-specific lipolytic acyl hydrolase (LAH), an activity which is thought to be involved in the response of tubers to pathogens. Catalyzes the non-specific hydrolysis of phospholipids, glycolipids, sulfolipids, and mono- and diacylglycerols includng p-nitrophenyl caprate. Confers resistance to southern corn rootworm (SCRW). This chain is Patatin-17, found in Solanum cardiophyllum (Heartleaf nightshade).